The following is a 274-amino-acid chain: MKLLILTICALHVNQMMALKDCVVVNGKNYGKEVLKDNIHQAYQLSFDPQQNTLFFSYSDEVDSKTVLKMGYLNLATKSFGEISGVKDGMATAVDTTNHIVYLGGKDGIYTYDYATKSAKNIGVTSLSIWQMFYCPIHGLFFTTSDEKPYVFKDGQVNQIVEASSSKTRVMAVGEHHDVFFANSSGIFLFNHHTNKVIDLGDYNVNAFTKDSKGKLYFSSPVGFYAVNEADRKMNKLISETGEDSIWGAAFDKDDNIVYSNEDNIVKLVPKDKC.

Positions 1–18 (MKLLILTICALHVNQMMA) are cleaved as a signal peptide. N-linked (GlcNAc...) asparagine glycosylation is present at N183.

As to quaternary structure, monomer. As to expression, present in larval hemolymph and synthesized by the fat body.

Functionally, binds to an ommochrome, ommatin D which is a yellow chromophore. May be involved in guiding the chromophore through the hemolymph from the epidermis to the gut. The sequence is that of Ommochrome-binding protein from Manduca sexta (Tobacco hawkmoth).